The following is a 316-amino-acid chain: Acetyl-coenzyme A carboxylase carboxyl transferase subunit alpha (316 aa).

Residues 24 to 291 (NIKDKADIVD…KEALIQQLNE (268 aa)) enclose the CoA carboxyltransferase C-terminal domain.

This sequence belongs to the AccA family. As to quaternary structure, acetyl-CoA carboxylase is a heterohexamer composed of biotin carboxyl carrier protein (AccB), biotin carboxylase (AccC) and two subunits each of ACCase subunit alpha (AccA) and ACCase subunit beta (AccD).

Its subcellular location is the cytoplasm. It carries out the reaction N(6)-carboxybiotinyl-L-lysyl-[protein] + acetyl-CoA = N(6)-biotinyl-L-lysyl-[protein] + malonyl-CoA. It participates in lipid metabolism; malonyl-CoA biosynthesis; malonyl-CoA from acetyl-CoA: step 1/1. Functionally, component of the acetyl coenzyme A carboxylase (ACC) complex. First, biotin carboxylase catalyzes the carboxylation of biotin on its carrier protein (BCCP) and then the CO(2) group is transferred by the carboxyltransferase to acetyl-CoA to form malonyl-CoA. This is Acetyl-coenzyme A carboxylase carboxyl transferase subunit alpha from Ruthia magnifica subsp. Calyptogena magnifica.